The sequence spans 380 residues: uncharacterized protein (380 aa).

Positions 1-18 (MALRHLALLAGLLVGVAS) are cleaved as a signal peptide. N-linked (GlcNAc...) asparagine glycosylation is found at asparagine 104, asparagine 111, and asparagine 128. The chain crosses the membrane as a helical span at residues 148 to 168 (LFLGTFFISSGLILSVAGFFY). 2 disordered regions span residues 229-256 (PQTG…QGQG) and 336-380 (RFSG…ISNV). Pro residues predominate over residues 240–249 (PPLPGSPGDP). The span at 356 to 366 (VRRERPLDRAT) shows a compositional bias: basic and acidic residues.

It is found in the membrane. This is an uncharacterized protein from Homo sapiens (Human).